A 418-amino-acid chain; its full sequence is Serine hydroxymethyltransferase (418 aa).

Residues Leu-121 and 125-127 (GHL) each bind (6S)-5,6,7,8-tetrahydrofolate. Residue Lys-230 is modified to N6-(pyridoxal phosphate)lysine. Residue 355–357 (SPF) coordinates (6S)-5,6,7,8-tetrahydrofolate.

The protein belongs to the SHMT family. As to quaternary structure, homodimer. Requires pyridoxal 5'-phosphate as cofactor.

The protein localises to the cytoplasm. It carries out the reaction (6R)-5,10-methylene-5,6,7,8-tetrahydrofolate + glycine + H2O = (6S)-5,6,7,8-tetrahydrofolate + L-serine. It functions in the pathway one-carbon metabolism; tetrahydrofolate interconversion. Its pathway is amino-acid biosynthesis; glycine biosynthesis; glycine from L-serine: step 1/1. Catalyzes the reversible interconversion of serine and glycine with tetrahydrofolate (THF) serving as the one-carbon carrier. This reaction serves as the major source of one-carbon groups required for the biosynthesis of purines, thymidylate, methionine, and other important biomolecules. Also exhibits THF-independent aldolase activity toward beta-hydroxyamino acids, producing glycine and aldehydes, via a retro-aldol mechanism. The chain is Serine hydroxymethyltransferase from Streptococcus pyogenes serotype M49 (strain NZ131).